Here is a 1138-residue protein sequence, read N- to C-terminus: Nonsense-mediated mRNA decay factor SMG7 (1138 aa).

At Ser-2 the chain carries N-acetylserine. TPR repeat units lie at residues 152–185 (QHCL…VPSN) and 187–219 (QPYN…KFPF). Disordered regions lie at residues 515–612 (ATDG…LPSR), 649–745 (STAH…YQQA), 838–871 (QPNM…KSSP), 990–1090 (SLPA…PSME), and 1106–1138 (SSMM…NPPH). A Phosphoserine modification is found at Ser-519. Positions 525-537 (VLSTGRNPSNSCD) are enriched in polar residues. The segment covering 548–582 (ENIKPREVNQGRSFPPKEVKSQTELRKTPVSEARK) has biased composition (basic and acidic residues). Thr-575 is modified (phosphothreonine). Composition is skewed to polar residues over residues 584 to 597 (PVTQ…NSQF) and 649 to 673 (STAH…SQQR). Residues 674-721 (PSGPGPMNQGPQQSQPPSQPPLTSLPAQPTAQSTSQLQVQALAQQQQS) are compositionally biased toward low complexity. Phosphoserine occurs at positions 732 and 848. Residues 854-868 (PEQDPVPRMPFEDPK) show a composition bias toward basic and acidic residues. Positions 990–999 (SLPASSDHST) are enriched in polar residues. The span at 1000 to 1026 (PASQSPHSSNPSSLPSSPPTHNHNSAP) shows a compositional bias: low complexity. A compositionally biased stretch (basic and acidic residues) spans 1037–1051 (DNRDRRPADRWKTDK). Over residues 1063–1082 (SATSSSESSWHQASTPSGTW) the composition is skewed to polar residues. Low complexity predominate over residues 1118 to 1132 (QLLMQQKQKQQRGQG).

Part of a complex that contains SMG5, SMG7, PPP2CA, a short isoform of UPF3A (isoform UPF3AS, but not isoform UPF3AL) and phosphorylated UPF1. Interacts with DHX34; the interaction is RNA-independent.

It is found in the cytoplasm. It localises to the nucleus. Functionally, plays a role in nonsense-mediated mRNA decay. Recruits UPF1 to cytoplasmic mRNA decay bodies. Together with SMG5 is thought to provide a link to the mRNA degradation machinery involving exonucleolytic pathways, and to serve as an adapter for UPF1 to protein phosphatase 2A (PP2A), thereby triggering UPF1 dephosphorylation. This chain is Nonsense-mediated mRNA decay factor SMG7, found in Mus musculus (Mouse).